The following is a 403-amino-acid chain: MATGGGAEEERKRGRPQLLPPARPAARGEEADGGREKMGWAQVVKNLAEKKGEFREPRPPRREEESGGGGGSAGLGGPAGLAAPDLGDFPPAGRGDPKGRRRDPAGEAVDPRKKKGAAEAGRRKKAEAAAAAMATPARPGEAEDAAERPLQDEPAAAAGPGKGRFLVRICFQGDEGACPTRDFVVGALILRSIGMDPSDIYAVIQIPGSREFDVSFRSAEKLALFLRVYEEKREQEDCWENFVVLGRSKSSLKTLFILFRNETVDVEDIVTWLKRHCDVLAVPVKVTDRFGIWTGEYKCEIELRQGEGGVRHLPGAFFLGAERGYSWYKGQPKTCFKCGSRTHMSGSCTQDRCFRCGEEGHLSPYCRKGIVCNLCGKRGHAFAQCPKAVHNSVAAQLTGVAGH.

Residues 1-158 (MATGGGAEEE…PLQDEPAAAA (158 aa)) are disordered. Basic and acidic residues-rich tracts occupy residues 26-38 (ARGEEADGGREKM) and 47-65 (LAEKKGEFREPRPPRREEE). Residues 67–79 (GGGGGSAGLGGPA) are compositionally biased toward gly residues. Positions 95–121 (GDPKGRRRDPAGEAVDPRKKKGAAEAG) are enriched in basic and acidic residues. Residues 128–139 (AAAAAMATPARP) show a composition bias toward low complexity. The residue at position 201 (Tyr201) is a Phosphotyrosine. 3 consecutive CCHC-type zinc fingers follow at residues 335 to 350 (CFKCGSRTHMSGSCTQ), 352 to 368 (RCFRCGEEGHLSPYCRK), and 372 to 387 (CNLCGKRGHAFAQCPK).

As to quaternary structure, interacts with CGAS. Interacts with RIGI. Interacts with IFIH1/MDA5.

Its subcellular location is the cytoplasm. Nucleic acid-binding protein involved in innate immune response to DNA and RNA viruses. Binds DNA and RNA in the cytoplasm and acts by promoting recognition of viral nucleic acids by virus sensors, such as RIGI, IFIH1/MDA5 and CGAS. Acts as a co-sensor for recognition of double-stranded DNA (dsDNA) by cGAS in the cytoplasm, thereby playing a role in innate immune response to cytosolic dsDNA and DNA virus. Binds dsDNA and probably acts by promoting sensing of dsDNA by CGAS, leading to enhance CGAS oligomerization and activation. Promotes sensing of viral RNA by RIGI-like receptors proteins RIGI and IFIH1/MDA5 via two mechanisms: binds double-stranded RNA (dsRNA), enhancing the binding of RIGI and IFIH1/MDA5 to dsRNA and promotes 'Lys-63'-linked ubiquitination and subsequent activation of RIGI and IFIH1/MDA5. In Homo sapiens (Human), this protein is Zinc finger CCHC domain-containing protein 3.